Consider the following 59-residue polypeptide: Large ribosomal subunit protein uL30 (59 aa).

It belongs to the universal ribosomal protein uL30 family. Part of the 50S ribosomal subunit.

This is Large ribosomal subunit protein uL30 from Pectobacterium atrosepticum (strain SCRI 1043 / ATCC BAA-672) (Erwinia carotovora subsp. atroseptica).